The following is a 302-amino-acid chain: Acetaldehyde dehydrogenase 2 (302 aa).

Cys-130 serves as the catalytic Acyl-thioester intermediate. Residues 161–169 and Asn-272 each bind NAD(+); that span reads SVGPGTRRN.

It belongs to the acetaldehyde dehydrogenase family.

The catalysed reaction is acetaldehyde + NAD(+) + CoA = acetyl-CoA + NADH + H(+). The chain is Acetaldehyde dehydrogenase 2 from Cupriavidus necator (strain ATCC 17699 / DSM 428 / KCTC 22496 / NCIMB 10442 / H16 / Stanier 337) (Ralstonia eutropha).